A 1076-amino-acid chain; its full sequence is Carbamoyl phosphate synthase large chain (1076 aa).

The tract at residues 1-403 is carboxyphosphate synthetic domain; that stretch reads MPKRTDIQSI…SLQKALRGLE (403 aa). ATP contacts are provided by arginine 129, arginine 169, glycine 175, glycine 176, glutamate 208, leucine 210, glutamate 215, glycine 241, valine 242, histidine 243, glutamine 285, and glutamate 299. The 196-residue stretch at 133 to 328 folds into the ATP-grasp 1 domain; the sequence is DQAMKRIGLE…IAKIAAKLAV (196 aa). Residues glutamine 285, glutamate 299, and asparagine 301 each contribute to the Mg(2+) site. Mn(2+) is bound by residues glutamine 285, glutamate 299, and asparagine 301. Residues 404–553 are oligomerization domain; that stretch reads TGNDGLDPKV…YSSYEEECEA (150 aa). A carbamoyl phosphate synthetic domain region spans residues 554 to 935; that stretch reads EVSDRPKIMV…AFYKAQLGAG (382 aa). The ATP-grasp 2 domain occupies 678–869; it reads QHMVDKLGLK…LAQVAARCMA (192 aa). Positions 714, 753, 755, 760, 785, 786, 787, 788, 828, and 840 each coordinate ATP. Residues glutamine 828, glutamate 840, and asparagine 842 each coordinate Mg(2+). The Mn(2+) site is built by glutamine 828, glutamate 840, and asparagine 842. An MGS-like domain is found at 936 to 1076; sequence EAIPALEGER…LQELHAGVSQ (141 aa). The interval 936 to 1076 is allosteric domain; the sequence is EAIPALEGER…LQELHAGVSQ (141 aa).

It belongs to the CarB family. As to quaternary structure, composed of two chains; the small (or glutamine) chain promotes the hydrolysis of glutamine to ammonia, which is used by the large (or ammonia) chain to synthesize carbamoyl phosphate. Tetramer of heterodimers (alpha,beta)4. Mg(2+) serves as cofactor. It depends on Mn(2+) as a cofactor.

The enzyme catalyses hydrogencarbonate + L-glutamine + 2 ATP + H2O = carbamoyl phosphate + L-glutamate + 2 ADP + phosphate + 2 H(+). It catalyses the reaction hydrogencarbonate + NH4(+) + 2 ATP = carbamoyl phosphate + 2 ADP + phosphate + 2 H(+). Its pathway is amino-acid biosynthesis; L-arginine biosynthesis; carbamoyl phosphate from bicarbonate: step 1/1. It functions in the pathway pyrimidine metabolism; UMP biosynthesis via de novo pathway; (S)-dihydroorotate from bicarbonate: step 1/3. Its function is as follows. Large subunit of the glutamine-dependent carbamoyl phosphate synthetase (CPSase). CPSase catalyzes the formation of carbamoyl phosphate from the ammonia moiety of glutamine, carbonate, and phosphate donated by ATP, constituting the first step of 2 biosynthetic pathways, one leading to arginine and/or urea and the other to pyrimidine nucleotides. The large subunit (synthetase) binds the substrates ammonia (free or transferred from glutamine from the small subunit), hydrogencarbonate and ATP and carries out an ATP-coupled ligase reaction, activating hydrogencarbonate by forming carboxy phosphate which reacts with ammonia to form carbamoyl phosphate. The sequence is that of Carbamoyl phosphate synthase large chain from Halomonas eurihalina.